Consider the following 296-residue polypeptide: Mitochondrial arginine transporter BAC2 (296 aa).

Solcar repeat units lie at residues 13 to 93 (GREF…FSRS), 104 to 187 (PSYR…VRER), and 198 to 282 (ENLR…ALRC). 6 helical membrane-spanning segments follow: residues 16–36 (FVAGGFGGVAGIISGYPLDTL), 70–90 (AAPLASVTFQNAMVFQIYAIF), 110–130 (ALGGVATGAVQSLLLTPVELI), 162–181 (GLTITVLRDAPAHGLYFWTY), 204–224 (LVAGGLAGVASWVACYPLDVV), and 260–280 (TAVARAFVVNGAIFAAYEVAL).

The protein belongs to the mitochondrial carrier (TC 2.A.29) family. In terms of tissue distribution, high expression in flowers, stamens, petals and pollen. Expressed in roots, leaves and stems.

The protein resides in the mitochondrion inner membrane. Inhibited by mercuric chloride. In terms of biological role, mitochondrial arginine transporter that catalyzes the counter-exchange of arginine with lysine, ornithine, arginine, histidine and citrulline. Substrate preference in reconstituted proteoliposomes is arginine &gt; homoarginine &gt; citrulline &gt; histidine &gt; lysine &gt; ornithine. May be involved in the delivery of arginine, released from seed reserves, to mitochondrial arginase and the export of ornithine. May contribute to proline accumulation in response to hyperosmotic stress. This Arabidopsis thaliana (Mouse-ear cress) protein is Mitochondrial arginine transporter BAC2 (BAC2).